Here is a 200-residue protein sequence, read N- to C-terminus: Ciliary microtubule inner protein 2C (200 aa).

Belongs to the CIMIP2 family. As to quaternary structure, microtubule inner protein component of sperm flagellar doublet microtubules.

The protein resides in the cytoplasm. The protein localises to the cytoskeleton. It localises to the cilium axoneme. It is found in the flagellum axoneme. Functionally, microtubule inner protein (MIP) part of the dynein-decorated doublet microtubules (DMTs) in cilia axoneme, which is required for motile cilia beating. Binds to the intra-tubulin interfaces. In Mus musculus (Mouse), this protein is Ciliary microtubule inner protein 2C (Cimip2c).